The primary structure comprises 421 residues: UDP-N-acetylglucosamine 1-carboxyvinyltransferase (421 aa).

22 to 23 (KN) serves as a coordination point for phosphoenolpyruvate. Residue Arg94 participates in UDP-N-acetyl-alpha-D-glucosamine binding. Cys118 acts as the Proton donor in catalysis. Cys118 bears the 2-(S-cysteinyl)pyruvic acid O-phosphothioketal mark. UDP-N-acetyl-alpha-D-glucosamine-binding positions include 163-166 (KVSV), Asp308, and Ile330.

It belongs to the EPSP synthase family. MurA subfamily.

It localises to the cytoplasm. The enzyme catalyses phosphoenolpyruvate + UDP-N-acetyl-alpha-D-glucosamine = UDP-N-acetyl-3-O-(1-carboxyvinyl)-alpha-D-glucosamine + phosphate. Its pathway is cell wall biogenesis; peptidoglycan biosynthesis. In terms of biological role, cell wall formation. Adds enolpyruvyl to UDP-N-acetylglucosamine. The protein is UDP-N-acetylglucosamine 1-carboxyvinyltransferase of Orientia tsutsugamushi (strain Boryong) (Rickettsia tsutsugamushi).